Consider the following 725-residue polypeptide: Catalase-peroxidase 1 (725 aa).

The segment at residues tryptophan 96 to tyrosine 224 is a cross-link (tryptophyl-tyrosyl-methioninium (Trp-Tyr) (with M-250)). The Proton acceptor role is filled by histidine 97. The segment at residues tyrosine 224 to methionine 250 is a cross-link (tryptophyl-tyrosyl-methioninium (Tyr-Met) (with W-96)). Residue histidine 265 participates in heme b binding.

Belongs to the peroxidase family. Peroxidase/catalase subfamily. Homodimer or homotetramer. It depends on heme b as a cofactor. Formation of the three residue Trp-Tyr-Met cross-link is important for the catalase, but not the peroxidase activity of the enzyme.

The enzyme catalyses H2O2 + AH2 = A + 2 H2O. The catalysed reaction is 2 H2O2 = O2 + 2 H2O. Bifunctional enzyme with both catalase and broad-spectrum peroxidase activity. The polypeptide is Catalase-peroxidase 1 (Idiomarina loihiensis (strain ATCC BAA-735 / DSM 15497 / L2-TR)).